Consider the following 160-residue polypeptide: Fimbrial protein (160 aa).

A propeptide spans 1–7 (leader sequence); sequence MKSLQKG. Phenylalanine 8 is modified (N-methylphenylalanine). The chain crosses the membrane as a helical span at residues 8-28; sequence FTLIELMIVVAIIGILAAFAI.

Belongs to the N-Me-Phe pilin family. In terms of assembly, the pili are polar flexible filaments of about 5.4 nanometers diameter and 2.5 micrometers average length; they consist of only a single polypeptide chain arranged in a helical configuration of five subunits per turn in the assembled pilus.

It is found in the fimbrium. The protein localises to the membrane. This chain is Fimbrial protein (fimA), found in Dichelobacter nodosus (Bacteroides nodosus).